A 411-amino-acid polypeptide reads, in one-letter code: Dual-specificity RNA methyltransferase RlmN (411 aa).

The active-site Proton acceptor is the Glu125. The Radical SAM core domain occupies Glu131–Leu380. A disulfide bridge links Cys138 with Cys383. Residues Cys145, Cys149, and Cys152 each coordinate [4Fe-4S] cluster. S-adenosyl-L-methionine is bound by residues Gly209–Glu210, Ser241, Ser263–His265, and Asn340. Residue Cys383 is the S-methylcysteine intermediate of the active site.

Belongs to the radical SAM superfamily. RlmN family. [4Fe-4S] cluster is required as a cofactor.

The protein localises to the cytoplasm. It carries out the reaction adenosine(2503) in 23S rRNA + 2 reduced [2Fe-2S]-[ferredoxin] + 2 S-adenosyl-L-methionine = 2-methyladenosine(2503) in 23S rRNA + 5'-deoxyadenosine + L-methionine + 2 oxidized [2Fe-2S]-[ferredoxin] + S-adenosyl-L-homocysteine. It catalyses the reaction adenosine(37) in tRNA + 2 reduced [2Fe-2S]-[ferredoxin] + 2 S-adenosyl-L-methionine = 2-methyladenosine(37) in tRNA + 5'-deoxyadenosine + L-methionine + 2 oxidized [2Fe-2S]-[ferredoxin] + S-adenosyl-L-homocysteine. Its function is as follows. Specifically methylates position 2 of adenine 2503 in 23S rRNA and position 2 of adenine 37 in tRNAs. m2A2503 modification seems to play a crucial role in the proofreading step occurring at the peptidyl transferase center and thus would serve to optimize ribosomal fidelity. This is Dual-specificity RNA methyltransferase RlmN from Brucella melitensis biotype 2 (strain ATCC 23457).